Reading from the N-terminus, the 216-residue chain is GTP cyclohydrolase 1 (216 aa).

Residues Cys108, His111, and Cys179 each coordinate Zn(2+).

This sequence belongs to the GTP cyclohydrolase I family. As to quaternary structure, homomer.

It carries out the reaction GTP + H2O = 7,8-dihydroneopterin 3'-triphosphate + formate + H(+). It functions in the pathway cofactor biosynthesis; 7,8-dihydroneopterin triphosphate biosynthesis; 7,8-dihydroneopterin triphosphate from GTP: step 1/1. The chain is GTP cyclohydrolase 1 from Shewanella baltica (strain OS223).